We begin with the raw amino-acid sequence, 692 residues long: uncharacterized protein (692 aa).

The N-terminal 39 residues, 1–39, are a transit peptide targeting the chloroplast; the sequence is MLRLPSSMPIVSFPANPNLLINPQPSWPSRRGNSAVVVS. Residues 189–523 enclose the Protein kinase domain; the sequence is EISPEPVAAA…RLESLLSESL (335 aa). ATP contacts are provided by residues 195–203 and lysine 218; that span reads VAAASLGQV. Aspartate 343 functions as the Proton acceptor in the catalytic mechanism.

This sequence belongs to the protein kinase superfamily. ADCK protein kinase family.

It is found in the plastid. Its subcellular location is the chloroplast. The protein localises to the plastoglobule. This is an uncharacterized protein from Arabidopsis thaliana (Mouse-ear cress).